The following is a 490-amino-acid chain: Cytochrome P450 2C14 (490 aa).

Cysteine 435 is a binding site for heme.

It belongs to the cytochrome P450 family. It depends on heme as a cofactor.

It localises to the endoplasmic reticulum membrane. It is found in the microsome membrane. The catalysed reaction is an organic molecule + reduced [NADPH--hemoprotein reductase] + O2 = an alcohol + oxidized [NADPH--hemoprotein reductase] + H2O + H(+). Its function is as follows. Cytochromes P450 are a group of heme-thiolate monooxygenases. In liver microsomes, this enzyme is involved in an NADPH-dependent electron transport pathway. It oxidizes a variety of structurally unrelated compounds, including steroids, fatty acids, and xenobiotics. This is Cytochrome P450 2C14 (CYP2C14) from Oryctolagus cuniculus (Rabbit).